The following is a 371-amino-acid chain: Chemerin-like receptor 1 (371 aa).

Over 1–39 the chain is Extracellular; sequence MEYDAYNDSGIYDDEYSDGFGYFVDLEEASPWEAKVAPV. N-linked (GlcNAc...) asparagine glycosylation is present at Asn7. Residues 40-62 traverse the membrane as a helical segment; that stretch reads FLVVIYSLVCFLGLLGNGLVIVI. Residues 63–73 lie on the Cytoplasmic side of the membrane; the sequence is ATFKMKKTVNT. Residues 74–95 traverse the membrane as a helical segment; the sequence is VWFVNLAVADFLFNIFLPMHIT. The Extracellular segment spans residues 96 to 112; sequence YAAMDYHWVFGKAMCKI. Cys110 and Cys187 are disulfide-bonded. A helical membrane pass occupies residues 113–133; it reads SNFLLSHNMYTSVFLLTVISF. Topologically, residues 134–152 are cytoplasmic; the sequence is DRCISVLLPVWSQNHRSIR. The helical transmembrane segment at 153–174 threads the bilayer; that stretch reads LAYMTCSAVWVLAFFLSSPSLV. The Extracellular segment spans residues 175–222; that stretch reads FRDTANIHGKITCFNNFSLAAPESSPHPAHSQVVSTGYSRHVAVTVTR. Residue Asn190 is glycosylated (N-linked (GlcNAc...) asparagine). The chain crosses the membrane as a helical span at residues 223–243; sequence FLCGFLIPVFIITACYLTIVF. The Cytoplasmic segment spans residues 244–259; it reads KLQRNRLAKNKKPFKI. A helical membrane pass occupies residues 260 to 280; that stretch reads IITIIITFFLCWCPYHTLYLL. Residues 281–298 are Extracellular-facing; that stretch reads ELHHTAVPSSVFSLGLPL. Residues 299 to 318 traverse the membrane as a helical segment; that stretch reads ATAVAIANSCMNPILYVFMG. Over 319–371 the chain is Cytoplasmic; the sequence is HDFRKFKVALFSRLANALSEDTGPSSYPSHRSFTKMSSLNEKASVNEKETSTL. Residue Ser337 is modified to Phosphoserine. Phosphothreonine is present on Thr340. 3 positions are modified to phosphoserine: Ser347, Ser350, and Ser356. Phosphothreonine is present on Thr370.

Belongs to the chemokine-like receptor (CMKLR) family. In terms of tissue distribution, expressed in the differentiated adipocytes (at protein level). Ubiquitous. Highly expressed in adipose tissue and immature plasmacytoid dendritic cells (DCs) and at lower levels in myeloid DCs, macrophages, and NK cells. Expressed on macrophages isolated from different tissues, including peritoneal cavities, pleural cavities and spleen.

The protein localises to the cell membrane. Functionally, receptor for the chemoattractant adipokine chemerin/RARRES2 and for the omega-3 fatty acid derived molecule resolvin E1. Interaction with RARRES2 initiates activation of G proteins G(i)/G(o) and beta-arrestin pathways inducing cellular responses via second messenger pathways such as intracellular calcium mobilization, phosphorylation of MAP kinases MAPK1/MAPK3 (ERK1/2), TYRO3, MAPK14/P38MAPK and PI3K leading to multifunctional effects, like, reduction of immune responses, enhancing of adipogenesis and angionesis. Resolvin E1 down-regulates cytokine production in macrophages by reducing the activation of MAPK1/3 (ERK1/2) and NF-kappa-B. Positively regulates adipogenesis and adipocyte metabolism. This chain is Chemerin-like receptor 1 (Cmklr1), found in Mus musculus (Mouse).